A 225-amino-acid polypeptide reads, in one-letter code: THAP domain-containing protein 1 (225 aa).

The segment at 5 to 57 adopts a THAP-type zinc-finger fold; it reads CSAYGCKNRYQKDRNISFHKFPLARPEVCVQWVSAMSRRNFKPTKYSNICSQH. Residues 149 to 196 are a coiled coil; it reads TLEDCVQQKRRVQRLQEQMEKLRRRMKTLQQKCRRQERQLERLRANRG.

Belongs to the THAP1 family.

Its subcellular location is the nucleus. The protein localises to the nucleoplasm. Its function is as follows. DNA-binding transcription regulator that regulates endothelial cell proliferation and G1/S cell-cycle progression. Specifically binds the 5'-[AT]NTNN[GT]GGCA[AGT]-3' core DNA sequence and acts by modulating expression of pRB-E2F cell-cycle target genes. This is THAP domain-containing protein 1 (thap1) from Danio rerio (Zebrafish).